We begin with the raw amino-acid sequence, 309 residues long: Ribosomal RNA small subunit methyltransferase H (309 aa).

Residues 30–32 (GGH), Asp-50, Phe-74, Asp-96, and Gln-103 each bind S-adenosyl-L-methionine.

The protein belongs to the methyltransferase superfamily. RsmH family.

It localises to the cytoplasm. The catalysed reaction is cytidine(1402) in 16S rRNA + S-adenosyl-L-methionine = N(4)-methylcytidine(1402) in 16S rRNA + S-adenosyl-L-homocysteine + H(+). In terms of biological role, specifically methylates the N4 position of cytidine in position 1402 (C1402) of 16S rRNA. In Wigglesworthia glossinidia brevipalpis, this protein is Ribosomal RNA small subunit methyltransferase H.